The following is a 242-amino-acid chain: UPF0309 protein BMEA_B0892 (242 aa).

Residues 30-214 enclose the SIS domain; that stretch reads AADLIAAAAR…ARLVGEGDAP (185 aa).

Belongs to the UPF0309 family.

The chain is UPF0309 protein BMEA_B0892 from Brucella melitensis biotype 2 (strain ATCC 23457).